A 511-amino-acid chain; its full sequence is Histidine ammonia-lyase (511 aa).

A cross-link (5-imidazolinone (Ala-Gly)) is located at residues 142–144 (ASG). The residue at position 143 (serine 143) is a 2,3-didehydroalanine (Ser).

This sequence belongs to the PAL/histidase family. In terms of processing, contains an active site 4-methylidene-imidazol-5-one (MIO), which is formed autocatalytically by cyclization and dehydration of residues Ala-Ser-Gly.

It localises to the cytoplasm. It carries out the reaction L-histidine = trans-urocanate + NH4(+). The protein operates within amino-acid degradation; L-histidine degradation into L-glutamate; N-formimidoyl-L-glutamate from L-histidine: step 1/3. The sequence is that of Histidine ammonia-lyase from Brucella suis (strain ATCC 23445 / NCTC 10510).